The following is a 219-amino-acid chain: Large ribosomal subunit protein uL3 (219 aa).

Q151 is modified (N5-methylglutamine).

Belongs to the universal ribosomal protein uL3 family. As to quaternary structure, part of the 50S ribosomal subunit. Forms a cluster with proteins L14 and L19. Methylated by PrmB.

In terms of biological role, one of the primary rRNA binding proteins, it binds directly near the 3'-end of the 23S rRNA, where it nucleates assembly of the 50S subunit. The protein is Large ribosomal subunit protein uL3 of Blochmanniella floridana.